Here is a 128-residue protein sequence, read N- to C-terminus: VPLGVPVALGVPPSRPPCRPVNVTVAAEKDECPQCLAVTTTACGGYCRTREPVYRSPLGGPAQQACGYGALRYERLALPGCAPGADPTVAVPVALSCRCARCPMATADCTVAGLGPAFCGAPAGFGPQ.

6 disulfides stabilise this stretch: C18–C66, C32–C81, C35–C119, C43–C97, C47–C99, and C102–C109. Residue N22 is glycosylated (N-linked (GlcNAc...) asparagine).

It belongs to the glycoprotein hormones subunit beta family. As to quaternary structure, heterodimer of a common alpha chain and a unique beta chain which confers biological specificity to thyrotropin, lutropin, follitropin and gonadotropin.

The protein localises to the secreted. Promotes spermatogenesis and ovulation by stimulating the testes and ovaries to synthesize steroids. The sequence is that of Lutropin subunit beta (LHB) from Struthio camelus (Common ostrich).